The primary structure comprises 522 residues: Peptide methionine sulfoxide reductase MsrA/MsrB (522 aa).

Positions 17 to 174 (LALGACSPKI…ALALIRDPNA (158 aa)) constitute a Thioredoxin domain. A disulfide bond links cysteine 68 and cysteine 71. Residues 199 to 354 (RTIYLAGGCF…PNGYCHIDIR (156 aa)) are peptide methionine sulfoxide reductase A. Cysteine 207 is a catalytic residue. The region spanning 383 to 506 (DAELKRTLTE…NGASLKFIPL (124 aa)) is the MsrB domain. Residues cysteine 440 and cysteine 495 are joined by a disulfide bond. The active-site Nucleophile is cysteine 495.

In the N-terminal section; belongs to the thioredoxin family. This sequence in the central section; belongs to the MsrA Met sulfoxide reductase family. The protein in the C-terminal section; belongs to the MsrB Met sulfoxide reductase family.

It catalyses the reaction L-methionyl-[protein] + [thioredoxin]-disulfide + H2O = L-methionyl-(S)-S-oxide-[protein] + [thioredoxin]-dithiol. The enzyme catalyses [thioredoxin]-disulfide + L-methionine + H2O = L-methionine (S)-S-oxide + [thioredoxin]-dithiol. It carries out the reaction L-methionyl-[protein] + [thioredoxin]-disulfide + H2O = L-methionyl-(R)-S-oxide-[protein] + [thioredoxin]-dithiol. Its function is as follows. Has an important function as a repair enzyme for proteins that have been inactivated by oxidation. Catalyzes the reversible oxidation-reduction of methionine sulfoxide in proteins to methionine. This Neisseria meningitidis serogroup A / serotype 4A (strain DSM 15465 / Z2491) protein is Peptide methionine sulfoxide reductase MsrA/MsrB (msrAB).